Consider the following 140-residue polypeptide: Large ribosomal subunit protein uL16c (140 aa).

The protein belongs to the universal ribosomal protein uL16 family. In terms of assembly, part of the 50S ribosomal subunit.

It is found in the plastid. It localises to the chloroplast. This Cyanidium caldarium (Red alga) protein is Large ribosomal subunit protein uL16c.